An 868-amino-acid chain; its full sequence is MLKGIHKYLLMCFGTVLFTVQANAARIMSNNPIKEDWQCKVVDGEWSCKRAKKPKSVFDKKLTKTEKEKALADDLAWVKKPSYFVGGYYSNDSQFTKALCESKKTDLSYEKSEFDNDGTLIASGNVQVLQCDQELYGNNAIINLNSNNSAIRSLVMAGDVIVKQPSTGIVIRTTELDADMNDGTYSTGEAYFRLAREMPKTRIYDKEHFSGYLRGYAKTFKKESSGDIVLSDGYITSGDPYDNAWKITGNNIDIDTNTHMAYVKNGYFEIQDIPVMYIPYFSHPIDDRRRSGFLYPGFVQNANSGIGISVPYYFNLAPNYDLMLQSVIWSQRGIMENGTFRYMTKYFQGQFEGSLVPYDFKEGKMRGSFTLSTTGQYENINTNFKYEYVSDQNYYNDFSAGNVNLVTKTLLDREFDLTYTNDYVDSGLTVLDYGVVNPLLTVDNTPYAKLPEVKLNLTSDGYTPDYLTLSAQTLNTFFYKTAGPANTNPGAPQGTNVNAFRAYESPKIAFNFNKTWGYLNPSLEVPIRYYQLKNSPTDTIQFANSSVTSVLPIFNIDAGAYFDKDYTNENGTYTSTLHPRLFYTYIPYQDQTNIPLFDTSLQNEQYMQMFQVNRFTGYDRINNANQLTYALEASTTNQEDGTTLASAKIGQMAYFADRKVNLCQGNSACPNPGLMDPFSTDTFSPIMTSFEFQVMKNIYLSAQVNYRVKQQNVDYQVYQLSYKDENENIFNVSYNNIANNWSSLTQQQIAEGAKPQPQETITLSTILNITDHWGIAALWNYNFQQKQIANIFAGLQYNAKSWAVRALWQKTAYTNQDPNNPTLLGPLVNTYMFEFELKGLGGIGNTSDISSRLQQINGYQVGEWGDGI.

A signal peptide spans 1–24; it reads MLKGIHKYLLMCFGTVLFTVQANA.

It belongs to the LptD family. In terms of assembly, component of the lipopolysaccharide transport and assembly complex. Interacts with LptE and LptA.

The protein resides in the cell outer membrane. Its function is as follows. Together with LptE, is involved in the assembly of lipopolysaccharide (LPS) at the surface of the outer membrane. This Francisella tularensis subsp. novicida (strain U112) protein is LPS-assembly protein LptD.